The chain runs to 319 residues: Homoserine kinase (319 aa).

100 to 110 is an ATP binding site; the sequence is PLSSGMGSSAS.

Belongs to the GHMP kinase family. Homoserine kinase subfamily.

The protein localises to the cytoplasm. The enzyme catalyses L-homoserine + ATP = O-phospho-L-homoserine + ADP + H(+). The protein operates within amino-acid biosynthesis; L-threonine biosynthesis; L-threonine from L-aspartate: step 4/5. Catalyzes the ATP-dependent phosphorylation of L-homoserine to L-homoserine phosphate. This chain is Homoserine kinase, found in Chloroherpeton thalassium (strain ATCC 35110 / GB-78).